The following is a 210-amino-acid chain: Thymidylate kinase (210 aa).

Position 13 to 20 (13 to 20) interacts with ATP; sequence GLEGAGKS.

Belongs to the thymidylate kinase family.

The catalysed reaction is dTMP + ATP = dTDP + ADP. In terms of biological role, phosphorylation of dTMP to form dTDP in both de novo and salvage pathways of dTTP synthesis. This is Thymidylate kinase from Shewanella loihica (strain ATCC BAA-1088 / PV-4).